The following is a 213-amino-acid chain: Pyridoxine/pyridoxamine 5'-phosphate oxidase (213 aa).

FMN is bound by residues 57–62 (RIVLLR), 77–78 (FT), Arg-83, Lys-84, and Gln-106. Substrate is bound at residue Arg-62. Tyr-124, Arg-128, and Ser-132 together coordinate substrate. A disordered region spans residues 135-163 (GARASDQSRPLPDRKTLQKRVEEEEARYP). Residue 141-142 (QS) participates in FMN binding. The span at 145–163 (LPDRKTLQKRVEEEEARYP) shows a compositional bias: basic and acidic residues. An FMN-binding site is contributed by Trp-186. Residue 192-194 (RLH) participates in substrate binding. Arg-196 serves as a coordination point for FMN.

It belongs to the pyridoxamine 5'-phosphate oxidase family. Homodimer. Requires FMN as cofactor.

The enzyme catalyses pyridoxamine 5'-phosphate + O2 + H2O = pyridoxal 5'-phosphate + H2O2 + NH4(+). The catalysed reaction is pyridoxine 5'-phosphate + O2 = pyridoxal 5'-phosphate + H2O2. It participates in cofactor metabolism; pyridoxal 5'-phosphate salvage; pyridoxal 5'-phosphate from pyridoxamine 5'-phosphate: step 1/1. It functions in the pathway cofactor metabolism; pyridoxal 5'-phosphate salvage; pyridoxal 5'-phosphate from pyridoxine 5'-phosphate: step 1/1. Catalyzes the oxidation of either pyridoxine 5'-phosphate (PNP) or pyridoxamine 5'-phosphate (PMP) into pyridoxal 5'-phosphate (PLP). This chain is Pyridoxine/pyridoxamine 5'-phosphate oxidase, found in Granulibacter bethesdensis (strain ATCC BAA-1260 / CGDNIH1).